The sequence spans 458 residues: Adenylosuccinate synthetase (458 aa).

Residues 11-17 (GDEGKGG) and 39-41 (GHT) contribute to the GTP site. The Proton acceptor role is filled by aspartate 12. Mg(2+) is bound by residues aspartate 12 and glycine 39. Residues 12 to 15 (DEGK), 37 to 40 (NAGH), threonine 127, arginine 141, glutamine 232, threonine 247, and arginine 330 each bind IMP. Histidine 40 acts as the Proton donor in catalysis. 326 to 332 (TVTGRPR) contributes to the substrate binding site. GTP-binding positions include arginine 332, 358–360 (HLD), and 443–445 (GVG).

The protein belongs to the adenylosuccinate synthetase family. Homodimer. The cofactor is Mg(2+).

The protein localises to the cytoplasm. The catalysed reaction is IMP + L-aspartate + GTP = N(6)-(1,2-dicarboxyethyl)-AMP + GDP + phosphate + 2 H(+). Its pathway is purine metabolism; AMP biosynthesis via de novo pathway; AMP from IMP: step 1/2. Plays an important role in the de novo pathway of purine nucleotide biosynthesis. Catalyzes the first committed step in the biosynthesis of AMP from IMP. This is Adenylosuccinate synthetase from Haloarcula marismortui (strain ATCC 43049 / DSM 3752 / JCM 8966 / VKM B-1809) (Halobacterium marismortui).